A 258-amino-acid polypeptide reads, in one-letter code: Imidazole glycerol phosphate synthase subunit HisF (258 aa).

Catalysis depends on residues D11 and D130.

It belongs to the HisA/HisF family. Heterodimer of HisH and HisF.

Its subcellular location is the cytoplasm. The catalysed reaction is 5-[(5-phospho-1-deoxy-D-ribulos-1-ylimino)methylamino]-1-(5-phospho-beta-D-ribosyl)imidazole-4-carboxamide + L-glutamine = D-erythro-1-(imidazol-4-yl)glycerol 3-phosphate + 5-amino-1-(5-phospho-beta-D-ribosyl)imidazole-4-carboxamide + L-glutamate + H(+). The protein operates within amino-acid biosynthesis; L-histidine biosynthesis; L-histidine from 5-phospho-alpha-D-ribose 1-diphosphate: step 5/9. In terms of biological role, IGPS catalyzes the conversion of PRFAR and glutamine to IGP, AICAR and glutamate. The HisF subunit catalyzes the cyclization activity that produces IGP and AICAR from PRFAR using the ammonia provided by the HisH subunit. In Rhodospirillum centenum (strain ATCC 51521 / SW), this protein is Imidazole glycerol phosphate synthase subunit HisF.